A 473-amino-acid chain; its full sequence is AFENKLMKNYRFLGISTSSEGYITQIIGPVLDVAFPVGKMPNIFNSFIVKGQNPAGQSINVTCEVQQLLGNNKVRAVAMSATDGLMRGMEVIDTGAPLSVPVGEVTLGRIFNVLGEPVDNMGPVEATAKSPIHKPAPAFMDLETTVSIFETGIKVVDLLAPYRRGGKIGLFGGAGVGKTVLIMELINNIAKAHGGVSVFGGVGERTREGNDLYMEMKESKVINEENISESKVALVYGQMNEPPGARMRVGLTALTMAEYFRDVNKQDVLLFIDNIFRFVQAGSEVSALLGRMPSAVGYQPTLATEMGCLQERITSTKEGSITSIQAVYVPADDLTDPAPATTFAHLDATTVLSRGLAAKGIYPAVDPLDSTSTVLQPWIVGEEHYEVAQGVKQTLQRYKELQDIIAILGLDELSEQDRLLVARARKIERFLSQPFFVAEVFTGSPGKYVSLNETIRGFQNDFTGELDSLPEQA.

172–179 provides a ligand contact to ATP; sequence GGAGVGKT.

The protein belongs to the ATPase alpha/beta chains family. F-type ATPases have 2 components, CF(1) - the catalytic core - and CF(0) - the membrane proton channel. CF(1) has five subunits: alpha(3), beta(3), gamma(1), delta(1), epsilon(1). CF(0) has four main subunits: a(1), b(1), b'(1) and c(9-12).

The protein resides in the plastid. It localises to the chloroplast thylakoid membrane. It catalyses the reaction ATP + H2O + 4 H(+)(in) = ADP + phosphate + 5 H(+)(out). Functionally, produces ATP from ADP in the presence of a proton gradient across the membrane. The catalytic sites are hosted primarily by the beta subunits. This chain is ATP synthase subunit beta, chloroplastic, found in Equisetum arvense (Field horsetail).